A 451-amino-acid polypeptide reads, in one-letter code: MMSAPKITFIGAGSTIFVKNILGDVFHREALKTAHIALMDIDPTRLEESHIVVRKLMDSAGASGKITCHTQQKEALEDADFVVVAFQIGGYEPCTVTDFEVCKRHGLEQTIADTLGPGGIMRALRTIPHLWQICEDMTEVCPDATMLNYVNPMAMNTWAMYARYPHIKQVGLCHSVQGTAEELARDLNIDPATLRYRCAGINHMAFYLELERKTADGSYVNLYPELLAAYEAGQAPKPNIHGNTRCQNIVRYEMFKKLGYFVTESSEHFAEYTPWFIKPGREDLIERYKVPLDEYPKRCVEQLANWHKELEEYKKASRIDIKPSREYASTIMNAIWTGEPSVIYGNVRNDGLIDNLPQGCCVEVACLVDANGIQPTKVGTLPSHLAALMQTNINVQTLLTEAILTENRDRVYHAAMMDPHTAAVLGIDEIYALVDDLIAAHGDWLPGWLHR.

5 to 71 (PKITFIGAGS…ASGKITCHTQ (67 aa)) provides a ligand contact to NAD(+). Asn151 provides a ligand contact to substrate. A Mn(2+)-binding site is contributed by Cys173. The active-site Proton donor is the His174. Residue His203 coordinates Mn(2+). A substrate-binding site is contributed by Arg287.

This sequence belongs to the glycosyl hydrolase 4 family. In terms of assembly, homodimer. The cofactor is NAD(+). Mn(2+) serves as cofactor.

It catalyses the reaction Hydrolysis of terminal, non-reducing alpha-D-galactose residues in alpha-D-galactosides, including galactose oligosaccharides, galactomannans and galactolipids.. This chain is Alpha-galactosidase (melA), found in Escherichia coli (strain K12).